Reading from the N-terminus, the 229-residue chain is Flavin-dependent thymidylate synthase (229 aa).

The region spanning 1–217 is the ThyX domain; it reads MEFKVLDKGF…PWTFESFLKF (217 aa). FAD contacts are provided by residues threonine 55, 78–80, and glutamate 86; that span reads RHR. DUMP contacts are provided by residues 75 to 78, 86 to 90, and arginine 156; these read QWFR and EASLR. The short motif at 78–88 is the ThyX motif element; the sequence is RHRIGSFNEAS. FAD-binding positions include 172–174 and asparagine 178; that span reads NAR. Position 183 (arginine 183) interacts with dUMP. Residue arginine 183 is the Involved in ionization of N3 of dUMP, leading to its activation of the active site.

Belongs to the thymidylate synthase ThyX family. In terms of assembly, homotetramer. FAD serves as cofactor.

The catalysed reaction is dUMP + (6R)-5,10-methylene-5,6,7,8-tetrahydrofolate + NADPH + H(+) = dTMP + (6S)-5,6,7,8-tetrahydrofolate + NADP(+). Its pathway is pyrimidine metabolism; dTTP biosynthesis. Catalyzes the reductive methylation of 2'-deoxyuridine-5'-monophosphate (dUMP) to 2'-deoxythymidine-5'-monophosphate (dTMP) while utilizing 5,10-methylenetetrahydrofolate (mTHF) as the methyl donor, and NADPH and FADH(2) as the reductant. This chain is Flavin-dependent thymidylate synthase, found in Thermosipho melanesiensis (strain DSM 12029 / CIP 104789 / BI429).